Consider the following 2639-residue polypeptide: BAH and coiled-coil domain-containing protein 1 (2639 aa).

Disordered regions lie at residues 23-49, 84-107, 188-249, 669-702, 716-746, 939-1047, 1104-1331, 1457-1513, 1582-1666, 1722-1776, 1868-1893, and 2057-2119; these read SAAA…GKYF, SAAS…GSHP, APAH…GKER, FLSS…RQPP, VSRS…PRST, QRAA…QSTA, SDVH…HSSG, QREL…KKVK, KVKS…LGTE, EVKI…RDAL, FDDN…PLSA, and KKVS…DHFL. Low complexity-rich tracts occupy residues 24-41 and 84-98; these read AAAA…QPPA and SAAS…SSPP. 2 stretches are compositionally biased toward basic and acidic residues: residues 211 to 247 and 679 to 698; these read GPKD…DGGK and ERPD…DGEV. Position 222 is an N6-acetyllysine (lysine 222). Positions 946-964 are enriched in basic and acidic residues; that stretch reads RKPEDQHLDLEEPAQEKAP. Residues 972–988 are compositionally biased toward low complexity; that stretch reads ALTPTAPGAPSPAAGPT. The segment covering 989 to 1013 has biased composition (pro residues); it reads KLPPCCHPPDPKPPASSPTPPPRPS. Over residues 1106-1122 the composition is skewed to polar residues; that stretch reads VHSSNLEDPETMQTTAP. Residues 1182–1198 show a composition bias toward low complexity; it reads LEGLQELQCAALLEAGG. Positions 1212–1221 are enriched in basic and acidic residues; that stretch reads AREERSREEG. The span at 1244–1275 shows a compositional bias: acidic residues; it reads LEDEGEQPAPEEDELEEDELGQQSMEDSEEDC. Over residues 1307-1324 the composition is skewed to pro residues; sequence DSPPDPQPPAASGPPSTV. The stretch at 1439–1473 forms a coiled coil; sequence EVGMRVRLAELQRRYKEKQRELARLQRKHDHERDE. Positions 1457 to 1475 are enriched in basic and acidic residues; sequence QRELARLQRKHDHERDESS. The span at 1478 to 1492 shows a compositional bias: basic residues; sequence PARRGPGRPRKRKHS. Residues 1751 to 1761 show a composition bias toward basic residues; the sequence is GKKKAKGKAKG. A compositionally biased stretch (acidic residues) spans 1868–1888; it reads FDDNSSFSEEEEDEEEEEEDS. Serine 2274 bears the Phosphoserine mark. 3 disordered regions span residues 2317 to 2336, 2348 to 2383, and 2432 to 2472; these read SDCH…LAAG, SSSS…SDDE, and GAGS…ENRP. Residues 2348-2371 show a composition bias toward low complexity; sequence SSSSSGSSTSSSSGSVSTSSLCSS. A compositionally biased stretch (acidic residues) spans 2372 to 2383; the sequence is DNEDSSYSSDDE. A compositionally biased stretch (low complexity) spans 2432–2442; sequence GAGSGPSSSSK. One can recognise a BAH domain in the interval 2513 to 2633; it reads ETLRVGDCAV…PTTGRLVTAD (121 aa).

The protein is BAH and coiled-coil domain-containing protein 1 of Homo sapiens (Human).